We begin with the raw amino-acid sequence, 870 residues long: DNA mismatch repair protein MutS (870 aa).

Position 629 to 636 (629 to 636) interacts with ATP; the sequence is GPNMGGKS.

The protein belongs to the DNA mismatch repair MutS family.

Functionally, this protein is involved in the repair of mismatches in DNA. It is possible that it carries out the mismatch recognition step. This protein has a weak ATPase activity. The sequence is that of DNA mismatch repair protein MutS from Polaromonas naphthalenivorans (strain CJ2).